The following is a 549-amino-acid chain: Urocanate hydratase (549 aa).

NAD(+) is bound by residues 46-47 (GG), Q124, 170-172 (GMG), E190, R195, 236-237 (NA), 257-261 (QTSAH), 267-268 (YV), and Y316. C404 is an active-site residue. G486 lines the NAD(+) pocket.

Belongs to the urocanase family. NAD(+) is required as a cofactor.

It localises to the cytoplasm. The catalysed reaction is 4-imidazolone-5-propanoate = trans-urocanate + H2O. Its pathway is amino-acid degradation; L-histidine degradation into L-glutamate; N-formimidoyl-L-glutamate from L-histidine: step 2/3. Functionally, catalyzes the conversion of urocanate to 4-imidazolone-5-propionate. The chain is Urocanate hydratase from Caldanaerobacter subterraneus subsp. tengcongensis (strain DSM 15242 / JCM 11007 / NBRC 100824 / MB4) (Thermoanaerobacter tengcongensis).